The chain runs to 393 residues: tRNA(Met) cytidine acetate ligase (393 aa).

ATP is bound by residues G81, N142, and R167.

Belongs to the TmcAL family.

The protein localises to the cytoplasm. The catalysed reaction is cytidine(34) in elongator tRNA(Met) + acetate + ATP = N(4)-acetylcytidine(34) in elongator tRNA(Met) + AMP + diphosphate. In terms of biological role, catalyzes the formation of N(4)-acetylcytidine (ac(4)C) at the wobble position of elongator tRNA(Met), using acetate and ATP as substrates. First activates an acetate ion to form acetyladenylate (Ac-AMP) and then transfers the acetyl group to tRNA to form ac(4)C34. The sequence is that of tRNA(Met) cytidine acetate ligase from Bacillus cereus (strain 03BB102).